A 266-amino-acid chain; its full sequence is Movement protein (266 aa).

A disordered region spans residues 211–244 (SKTGKKFSSKSENNSGNNRPKPDKNQRKEKGLKV). The span at 230–244 (PKPDKNQRKEKGLKV) shows a compositional bias: basic and acidic residues.

This sequence belongs to the tobamovirus movement protein family. In terms of assembly, binds to host RBCS at the plasmodesmata; this interaction seems required for viral systemic movement.

It is found in the host cytoplasm. It localises to the host cytoskeleton. The protein resides in the host cell junction. Its subcellular location is the host plasmodesma. Its function is as follows. Transports viral genome to neighboring plant cells directly through plasmosdesmata, without any budding. The movement protein allows efficient cell to cell propagation, by bypassing the host cell wall barrier. Forms a ribonucleoprotein complex with viral RNA. Binds microtubules and modulates microtubule stability. Can bind double-stranded DNA. Evades host resistance (R) protein (e.g. tomato ToMV resistance protein TM-2(2), AC Q71BG9) in ToMV/TMV resistant plants. The polypeptide is Movement protein (MP) (Tomato brown rugose fruit virus (isolate TOBRFV/Tomato/Jordan/Tom1-Jo/2015) (ToBRFV)).